A 392-amino-acid chain; its full sequence is Gastricsin (392 aa).

A signal peptide spans methionine 1–alanine 16. Residues alanine 17–tyrosine 62 constitute a propeptide, activation peptide. Residues tyrosine 76–alanine 389 form the Peptidase A1 domain. The active site involves aspartate 94. 2 disulfide bridges follow: cysteine 107-cysteine 112 and cysteine 270-cysteine 275. Residue aspartate 280 is part of the active site. A disulfide bridge connects residues cysteine 314 and cysteine 347.

Belongs to the peptidase A1 family.

It localises to the secreted. The catalysed reaction is More restricted specificity than pepsin A, but shows preferential cleavage at Tyr-|-Xaa bonds. High activity on hemoglobin.. Functionally, hydrolyzes a variety of proteins. The protein is Gastricsin (Pgc) of Mus musculus (Mouse).